Reading from the N-terminus, the 447-residue chain is N-succinylarginine dihydrolase (447 aa).

Substrate contacts are provided by residues 19–28, Asn-110, and 137–138; these read GGLAVGNIAS and HR. Residue Glu-174 is part of the active site. Residue Arg-213 coordinates substrate. His-249 is an active-site residue. Residues Asp-251 and Asn-362 each coordinate substrate. Cys-368 (nucleophile) is an active-site residue.

The protein belongs to the succinylarginine dihydrolase family. In terms of assembly, homodimer.

The catalysed reaction is N(2)-succinyl-L-arginine + 2 H2O + 2 H(+) = N(2)-succinyl-L-ornithine + 2 NH4(+) + CO2. The protein operates within amino-acid degradation; L-arginine degradation via AST pathway; L-glutamate and succinate from L-arginine: step 2/5. In terms of biological role, catalyzes the hydrolysis of N(2)-succinylarginine into N(2)-succinylornithine, ammonia and CO(2). The protein is N-succinylarginine dihydrolase of Nitrosospira multiformis (strain ATCC 25196 / NCIMB 11849 / C 71).